The chain runs to 462 residues: Elongation factor 1-alpha 1 (462 aa).

Residue Gly2 is modified to N,N,N-trimethylglycine. The 238-residue stretch at 5–242 folds into the tr-type G domain; sequence KTHINIVVIG…DCILPPTRPT (238 aa). The segment at 14–21 is G1; it reads GHVDSGKS. 14–21 contacts GTP; that stretch reads GHVDSGKS. Residue Lys36 is modified to N6,N6,N6-trimethyllysine; alternate. Lys36 is subject to N6,N6-dimethyllysine; alternate. N6-methyllysine; alternate is present on Lys36. Lys55 is subject to N6,N6-dimethyllysine. A G2 region spans residues 70–74; it reads GITID. An N6,N6,N6-trimethyllysine; by EEF1AKMT1 modification is found at Lys79. The tract at residues 91–94 is G3; sequence DAPG. 153–156 provides a ligand contact to GTP; it reads NKMD. The segment at 153-156 is G4; sequence NKMD. Lys165 carries the post-translational modification N6,N6,N6-trimethyllysine; alternate; by EEF1AKMT3. Lys165 carries the N6,N6-dimethyllysine; alternate; by EEF1AKMT3 modification. Lys165 carries the N6-acetyllysine; alternate modification. Lys165 is modified (N6-methyllysine; alternate; by EEF1AKMT3). An N6-acetyllysine modification is found at Lys172. Position 194–196 (194–196) interacts with GTP; sequence SGW. The interval 194 to 196 is G5; that stretch reads SGW. Residue Lys273 is modified to N6-acetyllysine. Ser300 carries the phosphoserine; by TGFBR1 modification. Residue Glu301 is modified to 5-glutamyl glycerylphosphorylethanolamine. Lys318 is modified (N6,N6,N6-trimethyllysine; by EEF1AKMT2). Residue Glu374 is modified to 5-glutamyl glycerylphosphorylethanolamine. A Glycyl lysine isopeptide (Lys-Gly) (interchain with G-Cter in ubiquitin) cross-link involves residue Lys385. Position 392 is an N6-acetyllysine; alternate (Lys392). Lys392 carries the N6-succinyllysine; alternate modification. The residue at position 432 (Thr432) is a Phosphothreonine; by PASK. Residue Lys439 is modified to N6-acetyllysine.

Belongs to the TRAFAC class translation factor GTPase superfamily. Classic translation factor GTPase family. EF-Tu/EF-1A subfamily. As to quaternary structure, found in a nuclear export complex with XPO5, EEF1A1, Ran and aminoacylated tRNA. Interacts with PARP1 and TXK. Interacts with KARS1. May interact with ERGIC2. Interacts with IFIT1 (via TPR repeats 4-7). Interacts with DLC1, facilitating distribution to the membrane periphery and ruffles upon growth factor stimulation. Interacts with ZPR1; the interaction occurs in a epidermal growth factor (EGF)-dependent manner. Interacts with PPP1R16B. Interacts with SPHK1 and SPHK2; both interactions increase SPHK1 and SPHK2 kinase activity. Interacts with guanyl-nucleotide exchange factor EEF1B2. Interacts (via middle-region) with HTATIP2 (via N-terminus); the interaction is direct and competes with EEF1A1 binding to guanyl-nucleotide exchange factor EEF1B2, thereby inhibiting GDP for GTP exchange and reactivation of EEF1A1. Interacts with tRNA. In terms of processing, ISGylated. Post-translationally, phosphorylated by TXK. Phosphorylation by PASK increases translation efficiency. Phosphorylated by ROCK2. Phosphorylation by TGFBR1 inhibits translation elongation. Trimethylated at Lys-79 by EEF1AKMT1. Methylated at Lys-165 by EEF1AKMT3, methylation by EEF1AKMT3 is dynamic as well as inducible by stress conditions, such as ER-stress, and plays a regulatory role on mRNA translation. Trimethylated at Lys-318 by EEF1AKMT2. Mono-, di-, and trimethylated at Lys-36 by EEF1AKMT4; trimethylated form is predominant. Methylation by EEF1AKMT4 contributes to the fine-tuning of translation rates for a subset of tRNAs. Trimethylated at Gly-2 by METTL13. Mono- and dimethylated at Lys-55 by METTL13; dimethylated form is predominant. In terms of processing, ubiquitinated at Lys-385 by RNF14 in response to ribosome collisions (ribosome stalling), leading to its degradation by the proteasome and rescue of stalled ribosomes.

It localises to the cytoplasm. It is found in the nucleus. Its subcellular location is the nucleolus. The protein localises to the cell membrane. It catalyses the reaction GTP + H2O = GDP + phosphate + H(+). In terms of biological role, translation elongation factor that catalyzes the GTP-dependent binding of aminoacyl-tRNA (aa-tRNA) to the A-site of ribosomes during the elongation phase of protein synthesis. Base pairing between the mRNA codon and the aa-tRNA anticodon promotes GTP hydrolysis, releasing the aa-tRNA from EEF1A1 and allowing its accommodation into the ribosome. The growing protein chain is subsequently transferred from the P-site peptidyl tRNA to the A-site aa-tRNA, extending it by one amino acid through ribosome-catalyzed peptide bond formation. Also plays a role in the positive regulation of IFNG transcription in T-helper 1 cells as part of an IFNG promoter-binding complex with TXK and PARP1. Also plays a role in cytoskeleton organization by promoting actin bundling. The chain is Elongation factor 1-alpha 1 (EEF1A1) from Equus caballus (Horse).